Consider the following 387-residue polypeptide: Chaperone protein DnaJ (387 aa).

Residues 6 to 70 (DYYEILGLSR…EKRAQYDRFG (65 aa)) form the J domain. A CR-type zinc finger spans residues 130-212 (GVRKDIDVPR…CSGTGRVRNT (83 aa)). Zn(2+) contacts are provided by cysteine 143, cysteine 146, cysteine 160, cysteine 163, cysteine 186, cysteine 189, cysteine 200, and cysteine 203. CXXCXGXG motif repeat units lie at residues 143-150 (CSNCSGTG), 160-167 (CPTCGGTG), 186-193 (CSTCRGKG), and 200-207 (CPVCSGTG). Residues 143–162 (CSNCSGTGARPGTSPKRCPT) are disordered.

The protein belongs to the DnaJ family. As to quaternary structure, homodimer. It depends on Zn(2+) as a cofactor.

It localises to the cytoplasm. In terms of biological role, participates actively in the response to hyperosmotic and heat shock by preventing the aggregation of stress-denatured proteins and by disaggregating proteins, also in an autonomous, DnaK-independent fashion. Unfolded proteins bind initially to DnaJ; upon interaction with the DnaJ-bound protein, DnaK hydrolyzes its bound ATP, resulting in the formation of a stable complex. GrpE releases ADP from DnaK; ATP binding to DnaK triggers the release of the substrate protein, thus completing the reaction cycle. Several rounds of ATP-dependent interactions between DnaJ, DnaK and GrpE are required for fully efficient folding. Also involved, together with DnaK and GrpE, in the DNA replication of plasmids through activation of initiation proteins. The polypeptide is Chaperone protein DnaJ (Methanosarcina thermophila).